A 705-amino-acid chain; its full sequence is Elongation factor G (705 aa).

One can recognise a tr-type G domain in the interval glutamate 8 to asparagine 290. Residues alanine 17 to threonine 24, aspartate 88 to histidine 92, and asparagine 142 to aspartate 145 each bind GTP.

It belongs to the TRAFAC class translation factor GTPase superfamily. Classic translation factor GTPase family. EF-G/EF-2 subfamily.

The protein resides in the cytoplasm. Functionally, catalyzes the GTP-dependent ribosomal translocation step during translation elongation. During this step, the ribosome changes from the pre-translocational (PRE) to the post-translocational (POST) state as the newly formed A-site-bound peptidyl-tRNA and P-site-bound deacylated tRNA move to the P and E sites, respectively. Catalyzes the coordinated movement of the two tRNA molecules, the mRNA and conformational changes in the ribosome. The sequence is that of Elongation factor G from Francisella philomiragia subsp. philomiragia (strain ATCC 25017 / CCUG 19701 / FSC 153 / O#319-036).